The primary structure comprises 513 residues: Probable DNA ligase (513 aa).

E213 contributes to the ATP binding site. K215 acts as the N6-AMP-lysine intermediate in catalysis. 6 residues coordinate ATP: R220, R235, E264, F304, R376, and K382.

It belongs to the ATP-dependent DNA ligase family. It depends on Mg(2+) as a cofactor.

The catalysed reaction is ATP + (deoxyribonucleotide)n-3'-hydroxyl + 5'-phospho-(deoxyribonucleotide)m = (deoxyribonucleotide)n+m + AMP + diphosphate.. In terms of biological role, DNA ligase that seals nicks in double-stranded DNA during DNA replication, DNA recombination and DNA repair. This chain is Probable DNA ligase, found in Anaeromyxobacter dehalogenans (strain 2CP-C).